The following is a 529-amino-acid chain: Glycerol kinase 5 (529 aa).

Ser28 and Ser29 together coordinate ATP. Glycerol-binding residues include Arg98, Asp275, and Gln276. Residues Thr297, Gly340, and Gly440 each contribute to the ATP site.

It belongs to the FGGY kinase family.

The protein localises to the cytoplasm. It catalyses the reaction glycerol + ATP = sn-glycerol 3-phosphate + ADP + H(+). Its pathway is polyol metabolism; glycerol degradation via glycerol kinase pathway; sn-glycerol 3-phosphate from glycerol: step 1/1. Functionally, skin-specific kinase that plays a key role in glycerol metabolism, catalyzing its phosphorylation to produce sn-glycerol 3-phosphate. Involved in skin-specific regulation of sterol regulatory element-binding protein (SREBP) processing and lipid biosynthesis. This chain is Glycerol kinase 5, found in Homo sapiens (Human).